The primary structure comprises 108 residues: Inner membrane protein H108R (108 aa).

A helical transmembrane segment spans residues 10-32; that stretch reads LIVIITILITTRELSTTMLIVSL. Residues 49–64 are compositionally biased toward polar residues; that stretch reads ENNTFSMPQKNSFSES. The tract at residues 49-69 is disordered; sequence ENNTFSMPQKNSFSESYNKDK. N-linked (GlcNAc...) asparagine; by host glycosylation is present at N50.

Belongs to the asfivirus H108R family.

Its subcellular location is the virion membrane. The protein is Inner membrane protein H108R of Ornithodoros (relapsing fever ticks).